Consider the following 431-residue polypeptide: Adenylosuccinate synthetase (431 aa).

GTP is bound by residues 12–18 (GDEGKGK) and 40–42 (GHT). Asp-13 functions as the Proton acceptor in the catalytic mechanism. Asp-13 and Gly-40 together coordinate Mg(2+). Residues 13–16 (DEGK), 38–41 (NAGH), Thr-130, Arg-144, Gln-225, Thr-240, and Arg-304 each bind IMP. His-41 (proton donor) is an active-site residue. 300–306 (ATTGRPR) provides a ligand contact to substrate. Residues Arg-306, 332–334 (KLD), and 414–416 (SVG) each bind GTP.

It belongs to the adenylosuccinate synthetase family. As to quaternary structure, homodimer. The cofactor is Mg(2+).

Its subcellular location is the cytoplasm. The enzyme catalyses IMP + L-aspartate + GTP = N(6)-(1,2-dicarboxyethyl)-AMP + GDP + phosphate + 2 H(+). The protein operates within purine metabolism; AMP biosynthesis via de novo pathway; AMP from IMP: step 1/2. Plays an important role in the de novo pathway of purine nucleotide biosynthesis. Catalyzes the first committed step in the biosynthesis of AMP from IMP. The polypeptide is Adenylosuccinate synthetase (Anaeromyxobacter sp. (strain Fw109-5)).